Reading from the N-terminus, the 366-residue chain is Beta sliding clamp (366 aa).

It belongs to the beta sliding clamp family. In terms of assembly, forms a ring-shaped head-to-tail homodimer around DNA which binds and tethers DNA polymerases and other proteins to the DNA. The DNA replisome complex has a single clamp-loading complex (3 tau and 1 each of delta, delta', psi and chi subunits) which binds 3 Pol III cores (1 core on the leading strand and 2 on the lagging strand) each with a beta sliding clamp dimer. Additional proteins in the replisome are other copies of gamma, psi and chi, Ssb, DNA helicase and RNA primase.

Its subcellular location is the cytoplasm. Functionally, confers DNA tethering and processivity to DNA polymerases and other proteins. Acts as a clamp, forming a ring around DNA (a reaction catalyzed by the clamp-loading complex) which diffuses in an ATP-independent manner freely and bidirectionally along dsDNA. Initially characterized for its ability to contact the catalytic subunit of DNA polymerase III (Pol III), a complex, multichain enzyme responsible for most of the replicative synthesis in bacteria; Pol III exhibits 3'-5' exonuclease proofreading activity. The beta chain is required for initiation of replication as well as for processivity of DNA replication. In Chlamydia muridarum (strain MoPn / Nigg), this protein is Beta sliding clamp (dnaN).